The sequence spans 365 residues: UDP-N-acetylglucosamine--N-acetylmuramyl-(pentapeptide) pyrophosphoryl-undecaprenol N-acetylglucosamine transferase (365 aa).

Residues 17-19 (TGG), Asn-129, Arg-167, Ser-194, Ile-250, 269-274 (ALTVSE), and Gln-295 each bind UDP-N-acetyl-alpha-D-glucosamine.

It belongs to the glycosyltransferase 28 family. MurG subfamily.

It is found in the cell inner membrane. It carries out the reaction di-trans,octa-cis-undecaprenyl diphospho-N-acetyl-alpha-D-muramoyl-L-alanyl-D-glutamyl-meso-2,6-diaminopimeloyl-D-alanyl-D-alanine + UDP-N-acetyl-alpha-D-glucosamine = di-trans,octa-cis-undecaprenyl diphospho-[N-acetyl-alpha-D-glucosaminyl-(1-&gt;4)]-N-acetyl-alpha-D-muramoyl-L-alanyl-D-glutamyl-meso-2,6-diaminopimeloyl-D-alanyl-D-alanine + UDP + H(+). Its pathway is cell wall biogenesis; peptidoglycan biosynthesis. Its function is as follows. Cell wall formation. Catalyzes the transfer of a GlcNAc subunit on undecaprenyl-pyrophosphoryl-MurNAc-pentapeptide (lipid intermediate I) to form undecaprenyl-pyrophosphoryl-MurNAc-(pentapeptide)GlcNAc (lipid intermediate II). The chain is UDP-N-acetylglucosamine--N-acetylmuramyl-(pentapeptide) pyrophosphoryl-undecaprenol N-acetylglucosamine transferase from Shewanella woodyi (strain ATCC 51908 / MS32).